The chain runs to 240 residues: Tetrahydromethanopterin S-methyltransferase subunit A (240 aa).

Over 1 to 216 the chain is Cytoplasmic; it reads MADKKAPASG…DAALIAKFNS (216 aa). His85 serves as a coordination point for 5-hydroxybenzimidazolylcob(I)amide. The chain crosses the membrane as a helical span at residues 217-234; sequence GYYNGKIQGIAIGLFLSL. The Extracellular segment spans residues 235–240; sequence LIFSLL.

The protein belongs to the MtrA family. As to quaternary structure, the complex is composed of 8 subunits; MtrA, MtrB, MtrC, MtrD, MtrE, MtrF, MtrG and MtrH. Requires 5-hydroxybenzimidazolylcob(I)amide as cofactor.

The protein localises to the cell membrane. It catalyses the reaction 5-methyl-5,6,7,8-tetrahydromethanopterin + coenzyme M + 2 Na(+)(in) = 5,6,7,8-tetrahydromethanopterin + methyl-coenzyme M + 2 Na(+)(out). The protein operates within one-carbon metabolism; methanogenesis from CO(2); methyl-coenzyme M from 5,10-methylene-5,6,7,8-tetrahydromethanopterin: step 2/2. Functionally, part of a complex that catalyzes the formation of methyl-coenzyme M and tetrahydromethanopterin from coenzyme M and methyl-tetrahydromethanopterin. This is an energy-conserving, sodium-ion translocating step. This Methanococcus aeolicus (strain ATCC BAA-1280 / DSM 17508 / OCM 812 / Nankai-3) protein is Tetrahydromethanopterin S-methyltransferase subunit A.